The primary structure comprises 339 residues: DNA-directed RNA polymerase subunit alpha (339 aa).

The tract at residues 1 to 233 (MVREEVAGST…DLFLPFLHAE (233 aa)) is alpha N-terminal domain (alpha-NTD). Residues 264–339 (KKGIPLNCIF…IDLLKNKLSF (76 aa)) are alpha C-terminal domain (alpha-CTD).

Belongs to the RNA polymerase alpha chain family. In terms of assembly, in plastids the minimal PEP RNA polymerase catalytic core is composed of four subunits: alpha, beta, beta', and beta''. When a (nuclear-encoded) sigma factor is associated with the core the holoenzyme is formed, which can initiate transcription.

Its subcellular location is the plastid. It localises to the chloroplast. The catalysed reaction is RNA(n) + a ribonucleoside 5'-triphosphate = RNA(n+1) + diphosphate. Its function is as follows. DNA-dependent RNA polymerase catalyzes the transcription of DNA into RNA using the four ribonucleoside triphosphates as substrates. The polypeptide is DNA-directed RNA polymerase subunit alpha (Australopyrum velutinum (Mountain wheat-grass)).